The following is a 302-amino-acid chain: Aspartate carbamoyltransferase catalytic subunit (302 aa).

Carbamoyl phosphate contacts are provided by R53 and T54. Residue K82 coordinates L-aspartate. 3 residues coordinate carbamoyl phosphate: R103, H131, and Q134. Positions 164 and 223 each coordinate L-aspartate. Carbamoyl phosphate-binding residues include L260 and P261.

This sequence belongs to the aspartate/ornithine carbamoyltransferase superfamily. ATCase family. In terms of assembly, heterooligomer of catalytic and regulatory chains.

The catalysed reaction is carbamoyl phosphate + L-aspartate = N-carbamoyl-L-aspartate + phosphate + H(+). The protein operates within pyrimidine metabolism; UMP biosynthesis via de novo pathway; (S)-dihydroorotate from bicarbonate: step 2/3. Catalyzes the condensation of carbamoyl phosphate and aspartate to form carbamoyl aspartate and inorganic phosphate, the committed step in the de novo pyrimidine nucleotide biosynthesis pathway. The chain is Aspartate carbamoyltransferase catalytic subunit from Methanococcus vannielii (strain ATCC 35089 / DSM 1224 / JCM 13029 / OCM 148 / SB).